The chain runs to 373 residues: Ubiquitin carboxyl-terminal hydrolase 50 (373 aa).

Positions T44–Q364 constitute a USP domain. The Nucleophile role is filled by C53. H322 (proton acceptor) is an active-site residue.

The protein belongs to the peptidase C19 family.

The protein localises to the cytoplasm. Its subcellular location is the cytoskeleton. The protein resides in the microtubule organizing center. It localises to the centrosome. It is found in the nucleus. It catalyses the reaction Thiol-dependent hydrolysis of ester, thioester, amide, peptide and isopeptide bonds formed by the C-terminal Gly of ubiquitin (a 76-residue protein attached to proteins as an intracellular targeting signal).. Deubiquitinating enzyme that removes conjugated ubiquitin from specific proteins to regulate different cellular processes. Regulates the inflammasome signaling pathway by deubiquitinating 'Lys-63'-linked polyubiquitination of the PYCARD/ASC adapter protein. Regulates the ubiquitination and stability of the ACE2 protein. Acts as a negative regulator of the G2/M checkpoint pathway, by preventing serine/threonine kinase WEE1 degradation, thereby repressing entry into mitosis following activation of the G2/M DNA damage checkpoint. The chain is Ubiquitin carboxyl-terminal hydrolase 50 (USP50) from Macaca fascicularis (Crab-eating macaque).